Here is a 221-residue protein sequence, read N- to C-terminus: 3-dehydroquinate dehydratase (221 aa).

3-dehydroquinate contacts are provided by residues 33–35 (EIR) and Arg63. His118 functions as the Proton donor/acceptor in the catalytic mechanism. Lys144 functions as the Schiff-base intermediate with substrate in the catalytic mechanism. Residues Arg181, Thr200, and Gln204 each coordinate 3-dehydroquinate.

It belongs to the type-I 3-dehydroquinase family. As to quaternary structure, homodimer.

The catalysed reaction is 3-dehydroquinate = 3-dehydroshikimate + H2O. Its pathway is metabolic intermediate biosynthesis; chorismate biosynthesis; chorismate from D-erythrose 4-phosphate and phosphoenolpyruvate: step 3/7. Its function is as follows. Involved in the third step of the chorismate pathway, which leads to the biosynthesis of aromatic amino acids. Catalyzes the cis-dehydration of 3-dehydroquinate (DHQ) and introduces the first double bond of the aromatic ring to yield 3-dehydroshikimate. This Methanothermobacter thermautotrophicus (strain ATCC 29096 / DSM 1053 / JCM 10044 / NBRC 100330 / Delta H) (Methanobacterium thermoautotrophicum) protein is 3-dehydroquinate dehydratase.